Consider the following 338-residue polypeptide: Holliday junction branch migration complex subunit RuvB (338 aa).

Positions 1–181 (MTRTITPSIT…FGVISRLEFY (181 aa)) are large ATPase domain (RuvB-L). Residues leucine 20, arginine 21, glycine 62, lysine 65, threonine 66, threonine 67, 128–130 (EDF), arginine 171, tyrosine 181, and arginine 218 contribute to the ATP site. Threonine 66 serves as a coordination point for Mg(2+). Residues 182–252 (TDEELAFIIT…VVQDALALLE (71 aa)) are small ATPAse domain (RuvB-S). Residues 255–338 (EMGFDQMDRM…VPEPPQGKLF (84 aa)) form a head domain (RuvB-H) region. DNA contacts are provided by arginine 310 and arginine 315.

It belongs to the RuvB family. In terms of assembly, homohexamer. Forms an RuvA(8)-RuvB(12)-Holliday junction (HJ) complex. HJ DNA is sandwiched between 2 RuvA tetramers; dsDNA enters through RuvA and exits via RuvB. An RuvB hexamer assembles on each DNA strand where it exits the tetramer. Each RuvB hexamer is contacted by two RuvA subunits (via domain III) on 2 adjacent RuvB subunits; this complex drives branch migration. In the full resolvosome a probable DNA-RuvA(4)-RuvB(12)-RuvC(2) complex forms which resolves the HJ.

It is found in the cytoplasm. The catalysed reaction is ATP + H2O = ADP + phosphate + H(+). Functionally, the RuvA-RuvB-RuvC complex processes Holliday junction (HJ) DNA during genetic recombination and DNA repair, while the RuvA-RuvB complex plays an important role in the rescue of blocked DNA replication forks via replication fork reversal (RFR). RuvA specifically binds to HJ cruciform DNA, conferring on it an open structure. The RuvB hexamer acts as an ATP-dependent pump, pulling dsDNA into and through the RuvAB complex. RuvB forms 2 homohexamers on either side of HJ DNA bound by 1 or 2 RuvA tetramers; 4 subunits per hexamer contact DNA at a time. Coordinated motions by a converter formed by DNA-disengaged RuvB subunits stimulates ATP hydrolysis and nucleotide exchange. Immobilization of the converter enables RuvB to convert the ATP-contained energy into a lever motion, pulling 2 nucleotides of DNA out of the RuvA tetramer per ATP hydrolyzed, thus driving DNA branch migration. The RuvB motors rotate together with the DNA substrate, which together with the progressing nucleotide cycle form the mechanistic basis for DNA recombination by continuous HJ branch migration. Branch migration allows RuvC to scan DNA until it finds its consensus sequence, where it cleaves and resolves cruciform DNA. This chain is Holliday junction branch migration complex subunit RuvB, found in Geotalea uraniireducens (strain Rf4) (Geobacter uraniireducens).